Here is a 435-residue protein sequence, read N- to C-terminus: Endosome-associated-trafficking regulator 1 (435 aa).

Phosphoserine occurs at positions 18 and 147. Disordered stretches follow at residues 136–185 and 225–251; these read ASRH…TGWS and ESLPSWALSDTDSRVSPASPAGSPSAD. The segment covering 173–182 has biased composition (acidic residues); sequence LLDEEEDEDT. Residues 173-198 form a required for interaction with PTPN13 region; sequence LLDEEEDEDTGWSGAYLPSAIEQTHP. A compositionally biased stretch (low complexity) spans 240 to 250; sequence SPASPAGSPSA. A phosphoserine mark is found at Ser-243 and Ser-247. Residues 261–371 adopt a coiled-coil conformation; it reads DRHLRTLQIS…FQRENEALRC (111 aa).

The protein belongs to the ENTR1 family. In terms of assembly, found in a complex with ENTR1, PTPN13 and GIT1. Interacts with PTPN13 (via the FERM domain). Interacts (via N-terminus) with GIT1 (via N- and C-terminus); this interaction is direct. Interacts with NOD2. Interacts (via N-terminus) with IFT88. Interacts with VPS35. Phosphorylated. As to expression, expressed in the colon (at protein level).

The protein localises to the cytoplasm. The protein resides in the early endosome. It localises to the endosome. Its subcellular location is the recycling endosome. It is found in the midbody. The protein localises to the cytoskeleton. The protein resides in the microtubule organizing center. It localises to the centrosome. Its subcellular location is the cilium basal body. Its function is as follows. Endosome-associated protein that plays a role in membrane receptor sorting, cytokinesis and ciliogenesis. Involved in the endosome-to-plasma membrane trafficking and recycling of SNX27-retromer-dependent cargo proteins, such as GLUT1. Involved in the regulation of cytokinesis; the function may involve PTPN13 and GIT1. Plays a role in the formation of cilia. Involved in cargo protein localization, such as PKD2, at primary cilia. Involved in the presentation of the tumor necrosis factor (TNF) receptor TNFRSF1A on the cell surface, and hence in the modulation of the TNF-induced apoptosis. The protein is Endosome-associated-trafficking regulator 1 of Homo sapiens (Human).